Here is a 153-residue protein sequence, read N- to C-terminus: Nucleoside diphosphate kinase (153 aa).

ATP contacts are provided by lysine 13, phenylalanine 61, arginine 89, threonine 95, arginine 106, and asparagine 116. The Pros-phosphohistidine intermediate role is filled by histidine 119.

Belongs to the NDK family. Requires Mg(2+) as cofactor.

It localises to the cytoplasm. The protein localises to the cell membrane. It catalyses the reaction a 2'-deoxyribonucleoside 5'-diphosphate + ATP = a 2'-deoxyribonucleoside 5'-triphosphate + ADP. It carries out the reaction a ribonucleoside 5'-diphosphate + ATP = a ribonucleoside 5'-triphosphate + ADP. Its function is as follows. Major role in the synthesis of nucleoside triphosphates other than ATP. The ATP gamma phosphate is transferred to the NDP beta phosphate via a ping-pong mechanism, using a phosphorylated active-site intermediate. This is Nucleoside diphosphate kinase from Gallus gallus (Chicken).